The chain runs to 239 residues: tRNA (guanine-N(7)-)-methyltransferase (239 aa).

Glu-69, Glu-94, Asp-121, and Asp-144 together coordinate S-adenosyl-L-methionine. Asp-144 is an active-site residue. Substrate is bound by residues Lys-148, Asp-180, and 217–220 (TKFE).

Belongs to the class I-like SAM-binding methyltransferase superfamily. TrmB family. As to quaternary structure, monomer.

The enzyme catalyses guanosine(46) in tRNA + S-adenosyl-L-methionine = N(7)-methylguanosine(46) in tRNA + S-adenosyl-L-homocysteine. Its pathway is tRNA modification; N(7)-methylguanine-tRNA biosynthesis. In terms of biological role, catalyzes the formation of N(7)-methylguanine at position 46 (m7G46) in tRNA. This chain is tRNA (guanine-N(7)-)-methyltransferase, found in Buchnera aphidicola subsp. Acyrthosiphon pisum (strain 5A).